A 92-amino-acid polypeptide reads, in one-letter code: Small ribosomal subunit protein bS20 (92 aa).

Residues 1–25 (MANSAQARKRARQAAKANSHNSALR) are disordered.

The protein belongs to the bacterial ribosomal protein bS20 family.

Binds directly to 16S ribosomal RNA. The sequence is that of Small ribosomal subunit protein bS20 from Burkholderia mallei (strain NCTC 10247).